The following is a 649-amino-acid chain: MEALLQGLQRQDRMGALQDSCEAELQELMKQIDIMLDHKRSQWEAETETMKTRLELKEQELNCALDREERLNQEVRRLRQQLIQQEEETQNKTTQYEAQLSGFKEELNRLKKSYEKVQKKHLRSEMKAKAEEERSEVSRLTRRLEEFRQRSLDWEKQRLLYQQQLAGLEAQRKTLIEQTEMYQHQSHNRKQMLEQTSLVGRSELQNLSGQLHRANDSLCAKEEELETLKIQLRCAVEGQKRAEHETELSKQAVQALKEEKAELRATLQAHTEFLQGSRVQKHELLPEGYRGSEVLRENNSIRSVEERLQEMGQVGGETEVEAIRSKLSVSRMNEHRLQAEVTCLEDSVESVTSQCQLLAKELKGKEEYFHGVKEDHQKCLSENKKLKGQLSQAELTHKSVLDGMRKEISQLTQELHQRDIRMASSAGIDWERKIKAERQRAEREAAEHRMSLNALENLRQENCRLSELLQTQEPDVAQALVNLEQANQRLQRELLQTQEKLELIAQRRESEIQNAVDSISQELLNKQEQELRIMQERLKVYEQEMQTFRSQQDAASSGSSLESIFSEVWKEQATGSPISAASVDSAIEPVEDLASSLPVPPTSPANAVASRFLQEEEQRSHELLQRLNAHIEELKQESQRTVEHFTQAR.

Coiled coils occupy residues 19–185 (DSCE…YQHQ) and 222–556 (EEEL…DAAS). Position 560 is a phosphoserine; by atm and atr (Ser560). Residues 612-645 (FLQEEEQRSHELLQRLNAHIEELKQESQRTVEHF) adopt a coiled-coil conformation.

It belongs to the CEP63 family. Post-translationally, phosphorylation at Ser-560 by atm and atr promotes its delocalization from the centrosome and impairs its ability to promote centrosome dependent spindle assembly.

It is found in the cytoplasm. The protein localises to the cytoskeleton. It localises to the microtubule organizing center. The protein resides in the centrosome. Its subcellular location is the centriole. In terms of biological role, required for normal spindle assembly. Plays a key role in mother-centriole-dependent centriole duplication. Plays a role in DNA damage response. Following DNA damage, such as double-strand breaks (DSBs), is removed from centrosomes; this leads to the inactivation of spindle assembly and delay in mitotic progression. The polypeptide is Centrosomal protein of 63 kDa-A (cep63-a) (Xenopus laevis (African clawed frog)).